The sequence spans 179 residues: Negative modulator of initiation of replication (179 aa).

An interaction with DNA region spans residues 86-87 (AV).

It belongs to the SeqA family. Homodimer. Polymerizes to form helical filaments.

It localises to the cytoplasm. Negative regulator of replication initiation, which contributes to regulation of DNA replication and ensures that replication initiation occurs exactly once per chromosome per cell cycle. Binds to pairs of hemimethylated GATC sequences in the oriC region, thus preventing assembly of replication proteins and re-initiation at newly replicated origins. Repression is relieved when the region becomes fully methylated. In Shewanella woodyi (strain ATCC 51908 / MS32), this protein is Negative modulator of initiation of replication.